The following is a 323-amino-acid chain: Aquaporin NIP3-1 (323 aa).

At Met-1 the chain carries N-acetylmethionine. Helical transmembrane passes span 45–65 (LIGEFVGTFTMIFAGCSAIVV) and 73–93 (VTLPGIALVWGLVVTVMIYSI). Residues 102–104 (NPA) carry the NPA 1 motif. A run of 3 helical transmembrane segments spans residues 122-142 (GYIAAQLLGSTLAAAVLRLVF), 167-187 (TSFVMEFIATFNLMFVISAVA), and 196-216 (FAGIAIGATIVLDILFSGPIS). The short motif at 221–223 (NPA) is the NPA 2 element. The chain crosses the membrane as a helical span at residues 239-259 (WLYIVSPVIGALSGAWTYGLL).

Belongs to the MIP/aquaporin (TC 1.A.8) family. NIP (TC 1.A.8.12) subfamily.

The protein localises to the membrane. Aquaporins facilitate the transport of water and small neutral solutes across cell membranes. The chain is Aquaporin NIP3-1 (NIP3-1) from Arabidopsis thaliana (Mouse-ear cress).